The following is a 186-amino-acid chain: dCTP deaminase (186 aa).

Position 107–112 (107–112 (KSTYAR)) interacts with dCTP. Catalysis depends on Glu-133, which acts as the Proton donor/acceptor. 3 residues coordinate dCTP: Gln-152, Tyr-166, and Gln-176.

This sequence belongs to the dCTP deaminase family. As to quaternary structure, homotrimer.

It catalyses the reaction dCTP + H2O + H(+) = dUTP + NH4(+). The protein operates within pyrimidine metabolism; dUMP biosynthesis; dUMP from dCTP (dUTP route): step 1/2. In terms of biological role, catalyzes the deamination of dCTP to dUTP. This chain is dCTP deaminase, found in Campylobacter lari (strain RM2100 / D67 / ATCC BAA-1060).